The primary structure comprises 88 residues: DNA-directed RNA polymerase subunit omega (88 aa).

The protein belongs to the RNA polymerase subunit omega family. The RNAP catalytic core consists of 2 alpha, 1 beta, 1 beta' and 1 omega subunit. When a sigma factor is associated with the core the holoenzyme is formed, which can initiate transcription.

The catalysed reaction is RNA(n) + a ribonucleoside 5'-triphosphate = RNA(n+1) + diphosphate. Promotes RNA polymerase assembly. Latches the N- and C-terminal regions of the beta' subunit thereby facilitating its interaction with the beta and alpha subunits. In Pseudomonas aeruginosa (strain LESB58), this protein is DNA-directed RNA polymerase subunit omega.